The sequence spans 40 residues: Photosystem II reaction center protein J (40 aa).

A helical membrane pass occupies residues 8 to 28 (IPLWLVALVAGTGVLVVVGLF).

It belongs to the PsbJ family. PSII is composed of 1 copy each of membrane proteins PsbA, PsbB, PsbC, PsbD, PsbE, PsbF, PsbH, PsbI, PsbJ, PsbK, PsbL, PsbM, PsbT, PsbX, PsbY, PsbZ, Psb30/Ycf12, peripheral proteins PsbO, CyanoQ (PsbQ), PsbU, PsbV and a large number of cofactors. It forms dimeric complexes.

The protein localises to the cellular thylakoid membrane. In terms of biological role, one of the components of the core complex of photosystem II (PSII). PSII is a light-driven water:plastoquinone oxidoreductase that uses light energy to abstract electrons from H(2)O, generating O(2) and a proton gradient subsequently used for ATP formation. It consists of a core antenna complex that captures photons, and an electron transfer chain that converts photonic excitation into a charge separation. This chain is Photosystem II reaction center protein J, found in Trichodesmium erythraeum (strain IMS101).